We begin with the raw amino-acid sequence, 171 residues long: Crossover junction endodeoxyribonuclease RuvC (171 aa).

Residues D11, E71, and D143 contribute to the active site. Mg(2+) is bound by residues D11, E71, and D143.

Belongs to the RuvC family. Homodimer which binds Holliday junction (HJ) DNA. The HJ becomes 2-fold symmetrical on binding to RuvC with unstacked arms; it has a different conformation from HJ DNA in complex with RuvA. In the full resolvosome a probable DNA-RuvA(4)-RuvB(12)-RuvC(2) complex forms which resolves the HJ. The cofactor is Mg(2+).

It is found in the cytoplasm. It carries out the reaction Endonucleolytic cleavage at a junction such as a reciprocal single-stranded crossover between two homologous DNA duplexes (Holliday junction).. In terms of biological role, the RuvA-RuvB-RuvC complex processes Holliday junction (HJ) DNA during genetic recombination and DNA repair. Endonuclease that resolves HJ intermediates. Cleaves cruciform DNA by making single-stranded nicks across the HJ at symmetrical positions within the homologous arms, yielding a 5'-phosphate and a 3'-hydroxyl group; requires a central core of homology in the junction. The consensus cleavage sequence is 5'-(A/T)TT(C/G)-3'. Cleavage occurs on the 3'-side of the TT dinucleotide at the point of strand exchange. HJ branch migration catalyzed by RuvA-RuvB allows RuvC to scan DNA until it finds its consensus sequence, where it cleaves and resolves the cruciform DNA. The sequence is that of Crossover junction endodeoxyribonuclease RuvC from Chelativorans sp. (strain BNC1).